Consider the following 904-residue polypeptide: Eukaryotic translation initiation factor 3 subunit C (904 aa).

Disordered stretches follow at residues 1 to 38 (MSRFFAGGSESDSDSSSDSEPIQRQTAPQFTFSDEEED) and 156 to 290 (FRES…TSEK). Residues 22 to 32 (IQRQTAPQFTF) are compositionally biased toward polar residues. The segment covering 161-183 (DAADDEDEEEEKKEEEESDDEEA) has biased composition (acidic residues). Over residues 194-206 (FKKDTVEKVKVEK) the composition is skewed to basic and acidic residues. Over residues 207–232 (DDDDSDDSIDWGQDSDSDESSSEEEA) the composition is skewed to acidic residues. Basic and acidic residues predominate over residues 237-247 (IRERFLKRPEK). Over residues 257–272 (KEKKKTKETKDSRKKK) the composition is skewed to basic residues. The region spanning 636-812 (FHMHINLELL…ETVVLHRSEP (177 aa)) is the PCI domain. The interval 847-904 (RGGNQGYNRDRQNYRNQNQNRENWNNNRRQDRGNRNRNQNRDREQREQHRVEFEEKAE) is disordered. Residues 860-873 (YRNQNQNRENWNNN) show a composition bias toward low complexity. The span at 874–904 (RRQDRGNRNRNQNRDREQREQHRVEFEEKAE) shows a compositional bias: basic and acidic residues.

It belongs to the eIF-3 subunit C family. As to quaternary structure, component of the eukaryotic translation initiation factor 3 (eIF-3) complex.

The protein localises to the cytoplasm. Functionally, component of the eukaryotic translation initiation factor 3 (eIF-3) complex, which is involved in protein synthesis of a specialized repertoire of mRNAs and, together with other initiation factors, stimulates binding of mRNA and methionyl-tRNAi to the 40S ribosome. The eIF-3 complex specifically targets and initiates translation of a subset of mRNAs involved in cell proliferation. This is Eukaryotic translation initiation factor 3 subunit C from Culex quinquefasciatus (Southern house mosquito).